Consider the following 386-residue polypeptide: Putative acid--amine ligase YgiC (386 aa).

100–102 is an ATP binding site; the sequence is RLD. Positions 102, 115, and 117 each coordinate Mg(2+). Residues lysine 267, lysine 302, glycine 309, glutamine 336, and 371-373 contribute to the ATP site; that span reads LIT.

It belongs to the glutathionylspermidine synthase preATP-grasp family.

In terms of biological role, may be a ligase forming an amide bond. Shows ATPase activity. The sequence is that of Putative acid--amine ligase YgiC (ygiC) from Escherichia coli O157:H7.